A 211-amino-acid chain; its full sequence is Protein-lysine N-methyltransferase DDB_G0272708 (211 aa).

Belongs to the class I-like SAM-binding methyltransferase superfamily. EFM5 family.

It is found in the cytoplasm. Its function is as follows. S-adenosyl-L-methionine-dependent protein-lysine N-methyltransferase that methylates elongation factor 1-alpha. The protein is Protein-lysine N-methyltransferase DDB_G0272708 of Dictyostelium discoideum (Social amoeba).